We begin with the raw amino-acid sequence, 369 residues long: Phenylalanine--tRNA ligase alpha subunit (369 aa).

E272 is a Mg(2+) binding site.

This sequence belongs to the class-II aminoacyl-tRNA synthetase family. Phe-tRNA synthetase alpha subunit type 1 subfamily. Tetramer of two alpha and two beta subunits. Requires Mg(2+) as cofactor.

The protein resides in the cytoplasm. It catalyses the reaction tRNA(Phe) + L-phenylalanine + ATP = L-phenylalanyl-tRNA(Phe) + AMP + diphosphate + H(+). The chain is Phenylalanine--tRNA ligase alpha subunit from Cutibacterium acnes (strain DSM 16379 / KPA171202) (Propionibacterium acnes).